The following is a 362-amino-acid chain: 3-dehydroquinate synthase (362 aa).

Residues 72–77 (DGEQYK), 106–110 (GVVGD), 130–131 (TT), Lys143, Lys152, and 170–173 (CLKT) contribute to the NAD(+) site. Residues Glu185, His248, and His265 each coordinate Zn(2+).

Belongs to the sugar phosphate cyclases superfamily. Dehydroquinate synthase family. Co(2+) serves as cofactor. Zn(2+) is required as a cofactor. It depends on NAD(+) as a cofactor.

Its subcellular location is the cytoplasm. The catalysed reaction is 7-phospho-2-dehydro-3-deoxy-D-arabino-heptonate = 3-dehydroquinate + phosphate. It participates in metabolic intermediate biosynthesis; chorismate biosynthesis; chorismate from D-erythrose 4-phosphate and phosphoenolpyruvate: step 2/7. Functionally, catalyzes the conversion of 3-deoxy-D-arabino-heptulosonate 7-phosphate (DAHP) to dehydroquinate (DHQ). The sequence is that of 3-dehydroquinate synthase from Aliivibrio salmonicida (strain LFI1238) (Vibrio salmonicida (strain LFI1238)).